Consider the following 154-residue polypeptide: UPF0178 protein YaiI (154 aa).

This sequence belongs to the UPF0178 family.

This is UPF0178 protein YaiI from Escherichia fergusonii (strain ATCC 35469 / DSM 13698 / CCUG 18766 / IAM 14443 / JCM 21226 / LMG 7866 / NBRC 102419 / NCTC 12128 / CDC 0568-73).